A 260-amino-acid chain; its full sequence is tRNA1(Val) (adenine(37)-N6)-methyltransferase (260 aa).

This sequence belongs to the methyltransferase superfamily. tRNA (adenine-N(6)-)-methyltransferase family.

The protein resides in the cytoplasm. It catalyses the reaction adenosine(37) in tRNA1(Val) + S-adenosyl-L-methionine = N(6)-methyladenosine(37) in tRNA1(Val) + S-adenosyl-L-homocysteine + H(+). Specifically methylates the adenine in position 37 of tRNA(1)(Val) (anticodon cmo5UAC). This Serratia proteamaculans (strain 568) protein is tRNA1(Val) (adenine(37)-N6)-methyltransferase.